The chain runs to 429 residues: 3-phosphoshikimate 1-carboxyvinyltransferase (429 aa).

3-phosphoshikimate contacts are provided by lysine 11, serine 12, and arginine 16. Lysine 11 is a phosphoenolpyruvate binding site. Glycine 82 and arginine 110 together coordinate phosphoenolpyruvate. 3-phosphoshikimate is bound by residues serine 155, glutamine 157, aspartate 302, and lysine 329. Position 157 (glutamine 157) interacts with phosphoenolpyruvate. The active-site Proton acceptor is aspartate 302. 2 residues coordinate phosphoenolpyruvate: arginine 333 and arginine 385.

It belongs to the EPSP synthase family. In terms of assembly, monomer.

The protein resides in the cytoplasm. It catalyses the reaction 3-phosphoshikimate + phosphoenolpyruvate = 5-O-(1-carboxyvinyl)-3-phosphoshikimate + phosphate. The protein operates within metabolic intermediate biosynthesis; chorismate biosynthesis; chorismate from D-erythrose 4-phosphate and phosphoenolpyruvate: step 6/7. Its function is as follows. Catalyzes the transfer of the enolpyruvyl moiety of phosphoenolpyruvate (PEP) to the 5-hydroxyl of shikimate-3-phosphate (S3P) to produce enolpyruvyl shikimate-3-phosphate and inorganic phosphate. The polypeptide is 3-phosphoshikimate 1-carboxyvinyltransferase (Helicobacter pylori (strain G27)).